Consider the following 270-residue polypeptide: Putative phosphoenolpyruvate synthase regulatory protein (270 aa).

150–157 (GVSRCGKT) provides a ligand contact to ADP.

Belongs to the pyruvate, phosphate/water dikinase regulatory protein family. PSRP subfamily.

The catalysed reaction is [pyruvate, water dikinase] + ADP = [pyruvate, water dikinase]-phosphate + AMP + H(+). It catalyses the reaction [pyruvate, water dikinase]-phosphate + phosphate + H(+) = [pyruvate, water dikinase] + diphosphate. Functionally, bifunctional serine/threonine kinase and phosphorylase involved in the regulation of the phosphoenolpyruvate synthase (PEPS) by catalyzing its phosphorylation/dephosphorylation. The sequence is that of Putative phosphoenolpyruvate synthase regulatory protein from Shewanella putrefaciens (strain CN-32 / ATCC BAA-453).